Consider the following 174-residue polypeptide: Gamma-crystallin A (174 aa).

Beta/gamma crystallin 'Greek key' domains lie at 2–40 and 41–83; these read GKIT…RVDS and GCWM…RIIP. Residues 84–87 are connecting peptide; it reads HTSS. Beta/gamma crystallin 'Greek key' domains lie at 88–128 and 129–171; these read HKLR…HVLE and GCWV…RRVT.

This sequence belongs to the beta/gamma-crystallin family. As to quaternary structure, monomer.

Crystallins are the dominant structural components of the vertebrate eye lens. The chain is Gamma-crystallin A (CRYGA) from Homo sapiens (Human).